We begin with the raw amino-acid sequence, 134 residues long: Phosphoribosyl-AMP cyclohydrolase (134 aa).

Aspartate 78 is a Mg(2+) binding site. Cysteine 79 lines the Zn(2+) pocket. Mg(2+) contacts are provided by aspartate 80 and aspartate 82. Cysteine 96 and cysteine 103 together coordinate Zn(2+).

It belongs to the PRA-CH family. Homodimer. The cofactor is Mg(2+). Zn(2+) serves as cofactor.

It localises to the cytoplasm. The catalysed reaction is 1-(5-phospho-beta-D-ribosyl)-5'-AMP + H2O = 1-(5-phospho-beta-D-ribosyl)-5-[(5-phospho-beta-D-ribosylamino)methylideneamino]imidazole-4-carboxamide. Its pathway is amino-acid biosynthesis; L-histidine biosynthesis; L-histidine from 5-phospho-alpha-D-ribose 1-diphosphate: step 3/9. Catalyzes the hydrolysis of the adenine ring of phosphoribosyl-AMP. In Cupriavidus taiwanensis (strain DSM 17343 / BCRC 17206 / CCUG 44338 / CIP 107171 / LMG 19424 / R1) (Ralstonia taiwanensis (strain LMG 19424)), this protein is Phosphoribosyl-AMP cyclohydrolase.